Here is a 585-residue protein sequence, read N- to C-terminus: Suppressor of mec-8 and unc-52 protein homolog 2 (585 aa).

Residues 1-14 are compositionally biased toward basic residues; the sequence is MKPSKSHHKEKTAR. Disordered regions lie at residues 1–52 and 219–324; these read MKPS…SSFH and KKKK…PRDK. The segment covering 15-39 has biased composition (basic and acidic residues); it reads RREEKLEESDNPKYRDRAKERRENQ. R-[ED] repeat units lie at residues 16–17, 29–30, 36–37, and 258–259; these read RE and RD. Over residues 276–288 the composition is skewed to basic and acidic residues; the sequence is LSTKQEEPPVART. 6 R-[ED] repeats span residues 322–323, 436–437, 445–446, 450–451, 540–541, and 542–543; these read RD and RE. The disordered stretch occupies residues 523–585; sequence FQFGVKMQDG…EAQTPKRSKH (63 aa). Over residues 530-548 the composition is skewed to basic and acidic residues; sequence QDGRKTRKQNRDRDQKLNN. At Thr-579 the chain carries Phosphothreonine.

It belongs to the RED family. Component of the spliceosome. Interacts with SMU1. Highly expressed in seedlings at 7 days after germination, young flowers before anthesis and developing siliques. Expressed at lower levels in roots, expanding leaves, open flowers, dry seeds and inflorescences. Not detected in senescing leaves.

The protein localises to the nucleus. Auxiliary spliceosomal protein involved in splicing of specific pre-mRNAs that affect multiple aspects of development. The protein is Suppressor of mec-8 and unc-52 protein homolog 2 (SMU2) of Arabidopsis thaliana (Mouse-ear cress).